The following is a 189-amino-acid chain: Mercury resistance operon ORF3 (189 aa).

The segment at residues 1–27 (MTSPSPTARRTRLRRRTALALAAAATA) is a signal peptide (tat-type signal). Residues 38–189 (TKANTPATRA…IQDALKKAGA (152 aa)) form the Thioredoxin domain.

Predicted to be exported by the Tat system. The position of the signal peptide cleavage has not been experimentally proven.

The protein localises to the secreted. Functionally, probable mercury binding protein. The protein is Mercury resistance operon ORF3 of Streptomyces lividans.